The sequence spans 190 residues: dCTP deaminase (190 aa).

Residue Lys-113–Arg-118 coordinates dCTP. Glu-139 (proton donor/acceptor) is an active-site residue. DCTP contacts are provided by Gln-158, Tyr-172, Lys-181, and Gln-182.

This sequence belongs to the dCTP deaminase family. In terms of assembly, homotrimer.

It carries out the reaction dCTP + H2O + H(+) = dUTP + NH4(+). Its pathway is pyrimidine metabolism; dUMP biosynthesis; dUMP from dCTP (dUTP route): step 1/2. Its function is as follows. Catalyzes the deamination of dCTP to dUTP. This Chlamydia trachomatis serovar L2 (strain ATCC VR-902B / DSM 19102 / 434/Bu) protein is dCTP deaminase.